The primary structure comprises 564 residues: Proline--tRNA ligase (564 aa).

It belongs to the class-II aminoacyl-tRNA synthetase family. ProS type 1 subfamily. In terms of assembly, homodimer.

Its subcellular location is the cytoplasm. The enzyme catalyses tRNA(Pro) + L-proline + ATP = L-prolyl-tRNA(Pro) + AMP + diphosphate. Catalyzes the attachment of proline to tRNA(Pro) in a two-step reaction: proline is first activated by ATP to form Pro-AMP and then transferred to the acceptor end of tRNA(Pro). As ProRS can inadvertently accommodate and process non-cognate amino acids such as alanine and cysteine, to avoid such errors it has two additional distinct editing activities against alanine. One activity is designated as 'pretransfer' editing and involves the tRNA(Pro)-independent hydrolysis of activated Ala-AMP. The other activity is designated 'posttransfer' editing and involves deacylation of mischarged Ala-tRNA(Pro). The misacylated Cys-tRNA(Pro) is not edited by ProRS. In Xanthomonas oryzae pv. oryzae (strain KACC10331 / KXO85), this protein is Proline--tRNA ligase.